A 377-amino-acid chain; its full sequence is Virion membrane protein A16 (377 aa).

Gly-2 carries N-myristoyl glycine; by host lipidation. Topologically, residues 2 to 341 are virion surface; the sequence is GAAVTLNRIK…VVKDKIKLPT (340 aa). The helical; Signal-anchor for type II membrane protein transmembrane segment at 342 to 362 threads the bilayer; that stretch reads WLGAAITLVVISVIFYFISIY. At 363–377 the chain is on the intravirion side; it reads SRTKIKTNDINVRRR.

Belongs to the poxviridae A16/G9/J5 family. In terms of assembly, part of a stable entry-fusion complex (EFC) which is at least composed of proteins A16, A21, A28, G3, G9, H2, J5, and L5. Formation of the viral membrane is necessary for the assembly of the complex. Interacts with G9. In terms of processing, most cysteines are linked by disulfide bonds. They are created by the viral disulfide bond formation pathway, a poxvirus-specific redox pathway that operates on the cytoplasmic side of the MV membranes.

The protein resides in the virion membrane. In terms of biological role, envelope protein part of the entry-fusion complex responsible for the virus membrane fusion with host cell membrane during virus entry. Also plays a role in cell-cell fusion (syncytium formation). The sequence is that of Virion membrane protein A16 from Homo sapiens (Human).